Here is a 158-residue protein sequence, read N- to C-terminus: Transcription elongation factor GreA (158 aa).

Belongs to the GreA/GreB family.

Necessary for efficient RNA polymerase transcription elongation past template-encoded arresting sites. The arresting sites in DNA have the property of trapping a certain fraction of elongating RNA polymerases that pass through, resulting in locked ternary complexes. Cleavage of the nascent transcript by cleavage factors such as GreA or GreB allows the resumption of elongation from the new 3'terminus. GreA releases sequences of 2 to 3 nucleotides. The protein is Transcription elongation factor GreA of Allorhizobium ampelinum (strain ATCC BAA-846 / DSM 112012 / S4) (Agrobacterium vitis (strain S4)).